The following is a 360-amino-acid chain: Photosystem II protein D1 (360 aa).

Helical transmembrane passes span 29–46 (YIGW…AATA), 118–133 (HFLL…QWEL), and 142–156 (WICV…SATA). H118 contacts chlorophyll a. Pheophytin a is bound at residue Y126. D170 and E189 together coordinate [CaMn4O5] cluster. A helical membrane pass occupies residues 197-218 (FHMLGVAGVFGGSLFSAMHGSL). Position 198 (H198) interacts with chlorophyll a. Residues H215 and 264 to 265 (SF) contribute to the a quinone site. H215 provides a ligand contact to Fe cation. H272 is a binding site for Fe cation. Residues 274–288 (FLAAWPVVGIWFTAL) form a helical membrane-spanning segment. [CaMn4O5] cluster-binding residues include H332, E333, D342, and A344. Positions 345–360 (AGEVAPVALTAPAING) are excised as a propeptide.

It belongs to the reaction center PufL/M/PsbA/D family. In terms of assembly, PSII is composed of 1 copy each of membrane proteins PsbA, PsbB, PsbC, PsbD, PsbE, PsbF, PsbH, PsbI, PsbJ, PsbK, PsbL, PsbM, PsbT, PsbX, PsbY, PsbZ, Psb30/Ycf12, peripheral proteins PsbO, CyanoQ (PsbQ), PsbU, PsbV and a large number of cofactors. It forms dimeric complexes. Requires The D1/D2 heterodimer binds P680, chlorophylls that are the primary electron donor of PSII, and subsequent electron acceptors. It shares a non-heme iron and each subunit binds pheophytin, quinone, additional chlorophylls, carotenoids and lipids. D1 provides most of the ligands for the Mn4-Ca-O5 cluster of the oxygen-evolving complex (OEC). There is also a Cl(-1) ion associated with D1 and D2, which is required for oxygen evolution. The PSII complex binds additional chlorophylls, carotenoids and specific lipids. as cofactor. Post-translationally, tyr-161 forms a radical intermediate that is referred to as redox-active TyrZ, YZ or Y-Z. C-terminally processed by CtpA; processing is essential to allow assembly of the oxygen-evolving complex and thus photosynthetic growth.

Its subcellular location is the cellular thylakoid membrane. It catalyses the reaction 2 a plastoquinone + 4 hnu + 2 H2O = 2 a plastoquinol + O2. Its function is as follows. Photosystem II (PSII) is a light-driven water:plastoquinone oxidoreductase that uses light energy to abstract electrons from H(2)O, generating O(2) and a proton gradient subsequently used for ATP formation. It consists of a core antenna complex that captures photons, and an electron transfer chain that converts photonic excitation into a charge separation. The D1/D2 (PsbA/PsbD) reaction center heterodimer binds P680, the primary electron donor of PSII as well as several subsequent electron acceptors. This Microchaete diplosiphon (Fremyella diplosiphon) protein is Photosystem II protein D1.